We begin with the raw amino-acid sequence, 183 residues long: UPF0302 protein BH1670 (183 aa).

This sequence belongs to the UPF0302 family.

This is UPF0302 protein BH1670 from Halalkalibacterium halodurans (strain ATCC BAA-125 / DSM 18197 / FERM 7344 / JCM 9153 / C-125) (Bacillus halodurans).